The sequence spans 70 residues: Testis-expressed protein 53 (70 aa).

Expressed in Testis.

This chain is Testis-expressed protein 53, found in Homo sapiens (Human).